The sequence spans 352 residues: MFAAATKSFVKQVGDGGRLVPVPSLSEADKYQPLSLVVKKKRCFLFPRYKFTSTPFTLKDILLGDREISAGISSYQLLNYEDESDVSLYGRRGNHIVNDVGINVAGSDSIAVKASFGIVTKHEVEVSTLLKEITTRKINFDHSLIRQSRSSRKAVLCVVMESIRTTRQCSLSVHAGIRGEAMRFHFMDEQNPKGRDKAIVFPAHTTIAFSVFELFIYLDGAFDLCVTSVSKGGFEREETATFALLYRLRNILFERNRRVMDVISRSQLYLDDLFSDYYDKPLSMTDISLKEGTHIRVNLLNHNIPKGPCILCGMGNFKRETVYGCFQCSVDGQKYVRLHAVPCFDIWHKRMK.

The protein belongs to the gasdermin family. As to quaternary structure, interacts with MAP1LC3B; interaction is direct. Interacts with IQGAP1. Interacts with ROCK2. Interacts with TRIOBP.

Its subcellular location is the peroxisome membrane. It localises to the cell projection. The protein resides in the cilium. Functionally, peroxisome-associated protein required to protect auditory hair cells against noise-induced damage. Acts by regulating noise-induced peroxisome proliferation in auditory hair cells and neurons, and promoting autophagic degradation of damaged peroxisomes (pexophagy). Noise overexposure increases reactive oxygen species (ROS) levels, causing oxidative damage to auditory hair cells and resulting in hearing loss. PJVK acts as a ROS sensor that recruits the autophagy machinery to trigger pexophagy of peroxisomes damaged by oxidative stress. In addition to pexophagy, also required to promote peroxisome proliferation in response to sound overstimulation. The chain is Pejvakin from Homo sapiens (Human).